The sequence spans 540 residues: Probable LRR receptor-like serine/threonine-protein kinase RPK1 (540 aa).

Residues 1–19 (MKLLGLVFLLFNLFMFSFS) form the signal peptide. The Extracellular segment spans residues 20 to 198 (RKLLTESGGG…PGKSGLYPIE (179 aa)). 2 LRR repeats span residues 118-142 (LSEI…IWGL) and 144-169 (KLEI…VLRK). A helical transmembrane segment spans residues 199–219 (IASIVSASVIVFVLLVLVILF). The Cytoplasmic segment spans residues 220 to 540 (IYTRKWKRNS…LLKRIQPSRL (321 aa)). Phosphothreonine occurs at positions 250 and 258. Residues 261 to 535 (FSNSNCIGHG…KQAVRLLKRI (275 aa)) form the Protein kinase domain. Residues 267 to 275 (IGHGGFGST) and Lys-289 contribute to the ATP site. Residues Tyr-334 and Tyr-372 each carry the phosphotyrosine modification. Asp-385 functions as the Proton acceptor in the catalytic mechanism. Tyr-427 is modified (phosphotyrosine). Thr-435 carries the phosphothreonine modification.

This sequence belongs to the protein kinase superfamily. Ser/Thr protein kinase family. Expressed in roots, stems, leaves, and flowers.

The protein localises to the cell membrane. It carries out the reaction L-seryl-[protein] + ATP = O-phospho-L-seryl-[protein] + ADP + H(+). The enzyme catalyses L-threonyl-[protein] + ATP = O-phospho-L-threonyl-[protein] + ADP + H(+). Functionally, involved in the main abscisic acid-mediated (ABA) signaling pathway and in early ABA perception. Together with RPK2, required for pattern formation along the radial axis (e.g. the apical embryonic domain cell types that generate cotyledon primordia), and the apical-basal axis (e.g. differentiation of the basal pole during early embryogenesis). The chain is Probable LRR receptor-like serine/threonine-protein kinase RPK1 (RPK1) from Arabidopsis thaliana (Mouse-ear cress).